Consider the following 282-residue polypeptide: Formamidopyrimidine-DNA glycosylase (282 aa).

Catalysis depends on P2, which acts as the Schiff-base intermediate with DNA. The active-site Proton donor is the E3. Catalysis depends on K60, which acts as the Proton donor; for beta-elimination activity. DNA is bound by residues H99, R118, and R163. The FPG-type zinc-finger motif lies at 248-282 (WVYGRTGEPCRVCGTSIERLKLGGRSAHFCPRCQA). R272 functions as the Proton donor; for delta-elimination activity in the catalytic mechanism.

The protein belongs to the FPG family. Monomer. It depends on Zn(2+) as a cofactor.

The catalysed reaction is Hydrolysis of DNA containing ring-opened 7-methylguanine residues, releasing 2,6-diamino-4-hydroxy-5-(N-methyl)formamidopyrimidine.. It carries out the reaction 2'-deoxyribonucleotide-(2'-deoxyribose 5'-phosphate)-2'-deoxyribonucleotide-DNA = a 3'-end 2'-deoxyribonucleotide-(2,3-dehydro-2,3-deoxyribose 5'-phosphate)-DNA + a 5'-end 5'-phospho-2'-deoxyribonucleoside-DNA + H(+). Its function is as follows. Involved in base excision repair of DNA damaged by oxidation or by mutagenic agents. Acts as a DNA glycosylase that recognizes and removes damaged bases. Has a preference for oxidized purines, such as 7,8-dihydro-8-oxoguanine (8-oxoG). Has AP (apurinic/apyrimidinic) lyase activity and introduces nicks in the DNA strand. Cleaves the DNA backbone by beta-delta elimination to generate a single-strand break at the site of the removed base with both 3'- and 5'-phosphates. The polypeptide is Formamidopyrimidine-DNA glycosylase (Rippkaea orientalis (strain PCC 8801 / RF-1) (Cyanothece sp. (strain PCC 8801))).